Consider the following 229-residue polypeptide: Flagellar L-ring protein (229 aa).

The signal sequence occupies residues 1-23 (MLSRLGARVLYCLAGLALLASGG). Cys24 carries the N-palmitoyl cysteine lipid modification. The S-diacylglycerol cysteine moiety is linked to residue Cys24.

The protein belongs to the FlgH family. As to quaternary structure, the basal body constitutes a major portion of the flagellar organelle and consists of four rings (L,P,S, and M) mounted on a central rod.

It localises to the cell outer membrane. The protein resides in the bacterial flagellum basal body. Functionally, assembles around the rod to form the L-ring and probably protects the motor/basal body from shearing forces during rotation. This is Flagellar L-ring protein from Cupriavidus pinatubonensis (strain JMP 134 / LMG 1197) (Cupriavidus necator (strain JMP 134)).